Here is a 561-residue protein sequence, read N- to C-terminus: MNINVAELLNGNYILLLFVVLALGLCLGKLRLGSIQLGNSIGVLVVSLLLGQQHFSINTDALNLGFMLFIFCVGVEAGPNFFSIFFRDGKNYLMLALVMVGSALVIALGLGKLFGWDIGLTAGMLAGSMTSTPVLVGAGDTLRHSGMESRQLSLALDNLSLGYALTYLIGLVSLIVGARYLPKLQHQDLQTSAQQIARERGLDTDANRKVYLPVIRAYRVGPELVAWTDGKNLRELGIYRQTGCYIERIRRNGILANPDGDAVLQMGDEIALVGYPDAHARLDPSFRNGKEVFDRDLLDMRIVTEEVVVKNHNAVGKRLAQLKLTDHGCFLNRVIRSQIEMPIDDNVVLNKGDVLQVSGDARRVKTIADRIGFISIHSQVTDLLAFCAFFVIGLMIGMITFQFSTFSFGMGNAAGLLFAGIMLGFMRANHPTFGYIPQGALSMVKEFGLMVFMAGVGLSAGSGINNGLGAIGGQMLIAGLIVSLVPVVICFLFGAYVLRMNRALLFGAMMGARTCAPAMEIISDTARSNIPALGYAGTYAIANVLLTLAGTIIVMVWPGLG.

The next 5 membrane-spanning stretches (helical) occupy residues 8–28, 32–52, 66–86, 94–114, and 158–178; these read LLNG…LCLG, LGSI…LLGQ, FMLF…SIFF, MLAL…GKLF, and NLSL…IVGA. 2 RCK C-terminal domains span residues 200–288 and 292–373; these read RGLD…SFRN and VFDR…RIGF. The next 5 membrane-spanning stretches (helical) occupy residues 383-403, 406-426, 451-471, 475-495, and 540-560; these read LLAF…TFQF, FSFG…LGFM, VFMA…LGAI, MLIA…LFGA, and AIAN…WPGL.

It belongs to the AAE transporter (TC 2.A.81) family. YbjL subfamily.

It is found in the cell membrane. This chain is Putative transport protein YbjL, found in Escherichia coli O127:H6 (strain E2348/69 / EPEC).